The sequence spans 149 residues: Flagellar assembly factor FliW (149 aa).

Belongs to the FliW family. Interacts with translational regulator CsrA and flagellin(s).

The protein resides in the cytoplasm. In terms of biological role, acts as an anti-CsrA protein, binds CsrA and prevents it from repressing translation of its target genes, one of which is flagellin. Binds to flagellin and participates in the assembly of the flagellum. The protein is Flagellar assembly factor FliW of Thermotoga petrophila (strain ATCC BAA-488 / DSM 13995 / JCM 10881 / RKU-1).